Here is a 1437-residue protein sequence, read N- to C-terminus: Protein SUPPRESSOR OF npr1-1, CONSTITUTIVE 1 (1437 aa).

The residue at position 1 (M1) is an N-acetylmethionine. One can recognise a TIR domain in the interval 19 to 182; the sequence is RRYDVFPSFR…ELAEDVLRKT (164 aa). 28–33 is a binding site for NAD(+); it reads RGEDVR. E93 is a catalytic residue. LRR repeat units lie at residues 554–576, 577–598, 600–621, 622–645, 647–668, 670–691, 692–715, 781–805, 807–828, 829–851, 852–875, 877–895, 897–918, 919–939, 940–962, 964–985, 1009–1029, 1030–1052, 1054–1075, 1076–1096, 1097–1121, 1123–1143, and 1161–1185; these read MRNL…VYLP, LKLR…TFKA, YLVN…TLPL, GSLK…SLAI, LEEL…IQNA, KLIY…DLNL, ESLE…KMGC, LGSL…SKAT, LESL…IGNL, HRLV…DVNL, SSLE…STNI, WLYL…IGNL, RLVR…DVNL, SSLE…PLIS, ESIK…SKAT, LKNL…IGNL, SSLM…PLIS, TNIV…IGNL, RLVK…DVNL, TRIE…DFTR, TVLM…IFRL, and LSDA…NIEY.

This sequence belongs to the disease resistance TIR-NB-LRR family. In terms of assembly, homodimer. Interacts (via TIR domain) with TPR1. Interacts with EDS1. Interacts with SRFR1. Interacts with HSP90-3. Binds to MORC1/CRT1. Interacts with TRAF1B. Post-translationally, met-1 is specifically acetylated by N-terminal acetyltransferase complex A (NatA). The NatA-mediated acetylation serves as a degradation signal. Met-1 is specifically acetylated by N-terminal acetyltransferase complex B (NatB). The NatB-mediated acetylation stabilizes SNC1. Expressed in guard cells and epidermal cells, but not detected in mesophyll cells.

Its subcellular location is the cytoplasm. The protein resides in the microsome. The protein localises to the nucleus. The catalysed reaction is NAD(+) + H2O = ADP-D-ribose + nicotinamide + H(+). Disease resistance protein of the TIR-NB-LRR-type. Part of the RPP5 locus that contains a cluster of several paralogous disease resistance (R) genes. Resistance proteins guard the plant against pathogens that contain an appropriate avirulence protein via an indirect interaction with this avirulence protein. That triggers a defense system including the hypersensitive response, which restricts the pathogen growth. Probably acts as a NAD(+) hydrolase (NADase): in response to activation, catalyzes cleavage of NAD(+) into ADP-D-ribose (ADPR) and nicotinamide; NAD(+) cleavage triggering a defense system that promotes cell death. Expression regulated by MOS1 at chromatin level. Nuclear localization of SNC1 is essential for its activity. ABA deficiency can rescue high-temperature inhibition of SNC1-mediated defense responses. The polypeptide is Protein SUPPRESSOR OF npr1-1, CONSTITUTIVE 1 (Arabidopsis thaliana (Mouse-ear cress)).